The sequence spans 343 residues: Protein RecA (343 aa).

Residue 65 to 72 coordinates ATP; the sequence is GPESSGKT.

This sequence belongs to the RecA family.

Its subcellular location is the cytoplasm. Its function is as follows. Can catalyze the hydrolysis of ATP in the presence of single-stranded DNA, the ATP-dependent uptake of single-stranded DNA by duplex DNA, and the ATP-dependent hybridization of homologous single-stranded DNAs. It interacts with LexA causing its activation and leading to its autocatalytic cleavage. The protein is Protein RecA of Xanthomonas campestris pv. campestris (strain 8004).